Consider the following 406-residue polypeptide: Succinylornithine transaminase (406 aa).

Lys252 carries the post-translational modification N6-(pyridoxal phosphate)lysine.

Belongs to the class-III pyridoxal-phosphate-dependent aminotransferase family. AstC subfamily. It depends on pyridoxal 5'-phosphate as a cofactor.

The enzyme catalyses N(2)-succinyl-L-ornithine + 2-oxoglutarate = N-succinyl-L-glutamate 5-semialdehyde + L-glutamate. Its pathway is amino-acid degradation; L-arginine degradation via AST pathway; L-glutamate and succinate from L-arginine: step 3/5. Its function is as follows. Catalyzes the transamination of N(2)-succinylornithine and alpha-ketoglutarate into N(2)-succinylglutamate semialdehyde and glutamate. Can also act as an acetylornithine aminotransferase. The chain is Succinylornithine transaminase from Escherichia coli O17:K52:H18 (strain UMN026 / ExPEC).